The following is a 379-amino-acid chain: Retron Se72 reverse transcriptase (379 aa).

The Reverse transcriptase domain maps to 1–245; that stretch reads MNKPRFNGTP…SKLSVTGLWV (245 aa). Positions 109, 188, and 189 each coordinate Mg(2+).

Belongs to the bacterial reverse transcriptase family.

It catalyses the reaction DNA(n) + a 2'-deoxyribonucleoside 5'-triphosphate = DNA(n+1) + diphosphate. Functionally, reverse transcriptase (RT) component of antiviral defense system retron Se72, composed of a non-coding RNA (ncRNA), this reverse transcriptase (RT) and the following cold shock-like protein. Expression of retron Se72 confers protection against bacteriophage lambda. At multiplicity of infection (MOI) of 0.02 cultures slow growth when infected with lambda but do not collapse, at MOI 2 cultures enter growth stasis. Responsible for synthesis of msDNA (a branched molecule with RNA linked by a 2',5'-phosphodiester bond to ssDNA). The retron transcript serves as primer (from a conserved internal G residue) and template for the reaction, and codes for the RT. The DNA segment is predicted to be 72 bases long. The chain is Retron Se72 reverse transcriptase from Salmonella heidelberg (strain 579083-10).